A 400-amino-acid polypeptide reads, in one-letter code: Acetate kinase (400 aa).

Asn-10 provides a ligand contact to Mg(2+). Lys-17 contributes to the ATP binding site. Position 91 (Arg-91) interacts with substrate. Asp-150 (proton donor/acceptor) is an active-site residue. ATP is bound by residues 210 to 214 (HLGNG), 285 to 287 (DCR), and 333 to 337 (GIGEN). Glu-387 is a binding site for Mg(2+).

This sequence belongs to the acetokinase family. Homodimer. Requires Mg(2+) as cofactor. Mn(2+) is required as a cofactor.

The protein resides in the cytoplasm. The enzyme catalyses acetate + ATP = acetyl phosphate + ADP. It functions in the pathway metabolic intermediate biosynthesis; acetyl-CoA biosynthesis; acetyl-CoA from acetate: step 1/2. Its function is as follows. Catalyzes the formation of acetyl phosphate from acetate and ATP. Can also catalyze the reverse reaction. The chain is Acetate kinase from Serratia proteamaculans (strain 568).